We begin with the raw amino-acid sequence, 383 residues long: S-adenosylmethionine synthase (383 aa).

H15 contacts ATP. D17 is a binding site for Mg(2+). E43 is a K(+) binding site. Positions 56 and 99 each coordinate L-methionine. The tract at residues Q99–R109 is flexible loop. ATP is bound by residues D164–K166, R230–F231, D239, R245–K246, A262, and K266. An L-methionine-binding site is contributed by D239. K270 is an L-methionine binding site.

It belongs to the AdoMet synthase family. In terms of assembly, homotetramer; dimer of dimers. Requires Mg(2+) as cofactor. The cofactor is K(+).

Its subcellular location is the cytoplasm. It catalyses the reaction L-methionine + ATP + H2O = S-adenosyl-L-methionine + phosphate + diphosphate. The protein operates within amino-acid biosynthesis; S-adenosyl-L-methionine biosynthesis; S-adenosyl-L-methionine from L-methionine: step 1/1. Catalyzes the formation of S-adenosylmethionine (AdoMet) from methionine and ATP. The overall synthetic reaction is composed of two sequential steps, AdoMet formation and the subsequent tripolyphosphate hydrolysis which occurs prior to release of AdoMet from the enzyme. The sequence is that of S-adenosylmethionine synthase from Shewanella loihica (strain ATCC BAA-1088 / PV-4).